A 511-amino-acid polypeptide reads, in one-letter code: GMP synthase [glutamine-hydrolyzing] (511 aa).

In terms of domain architecture, Glutamine amidotransferase type-1 spans 5 to 195; the sequence is DIIVLDFGSQ…AKYICDCEST (191 aa). Catalysis depends on cysteine 82, which acts as the Nucleophile. Residues histidine 169 and glutamate 171 contribute to the active site. Positions 196–386 constitute a GMPS ATP-PPase domain; it reads WNMGNFAKIK…LGLSPDLVYR (191 aa). 223-229 serves as a coordination point for ATP; that stretch reads SGGVDSS.

Homodimer.

It catalyses the reaction XMP + L-glutamine + ATP + H2O = GMP + L-glutamate + AMP + diphosphate + 2 H(+). The protein operates within purine metabolism; GMP biosynthesis; GMP from XMP (L-Gln route): step 1/1. Its function is as follows. Catalyzes the synthesis of GMP from XMP. This Campylobacter hominis (strain ATCC BAA-381 / DSM 21671 / CCUG 45161 / LMG 19568 / NCTC 13146 / CH001A) protein is GMP synthase [glutamine-hydrolyzing].